Here is a 221-residue protein sequence, read N- to C-terminus: Fructokinase (221 aa).

This sequence belongs to the carbohydrate kinase PfkB family.

The catalysed reaction is D-fructose + ATP = D-fructose 6-phosphate + ADP + H(+). This Salmonella thompson protein is Fructokinase (scrK).